We begin with the raw amino-acid sequence, 69 residues long: MGKQCEFCGKKPQTGNNVSHSNIKTKRRFMPNLQSARHQLPTGQIKTVSVCTRCLRSGAVVKPVVKKTA.

It belongs to the bacterial ribosomal protein bL28 family.

This chain is Large ribosomal subunit protein bL28, found in Oleidesulfovibrio alaskensis (strain ATCC BAA-1058 / DSM 17464 / G20) (Desulfovibrio alaskensis).